Consider the following 200-residue polypeptide: ATP synthase subunit s, mitochondrial (200 aa).

The transit peptide at 1-25 (MMPFGKISQQLCGVKKLPWSCDSRY) directs the protein to the mitochondrion. The segment at 1–61 (MMPFGKISQQ…SEWLLRCGAM (61 aa)) is N-terminal domain. Mg(2+) is bound at residue G59. 4 LRR repeats span residues 62–87 (VRYH…KYKI), 88–116 (QAID…KIRL), 117–141 (CKCH…KTIL), and 142–173 (EMEI…LSDL). Mg(2+) is bound at residue T93.

Belongs to the ATP synthase subunit s family. As to quaternary structure, homotetramer. Associates with ATP synthase.

It localises to the mitochondrion. The protein localises to the mitochondrion inner membrane. In terms of biological role, involved in regulation of mitochondrial membrane ATP synthase. Necessary for H(+) conduction of ATP synthase. Facilitates energy-driven catalysis of ATP synthesis by blocking a proton leak through an alternative proton exit pathway. This Homo sapiens (Human) protein is ATP synthase subunit s, mitochondrial.